Reading from the N-terminus, the 358-residue chain is 3-isopropylmalate dehydrogenase (358 aa).

An NAD(+)-binding site is contributed by 77–90 (GPKWTHLPPDQQPE). Positions 98, 108, 137, and 226 each coordinate substrate. Mg(2+) contacts are provided by Asp226, Asp250, and Asp254. 284–296 (GSAPDIAGKGIAN) lines the NAD(+) pocket.

It belongs to the isocitrate and isopropylmalate dehydrogenases family. LeuB type 1 subfamily. In terms of assembly, homodimer. Mg(2+) is required as a cofactor. The cofactor is Mn(2+).

It is found in the cytoplasm. The catalysed reaction is (2R,3S)-3-isopropylmalate + NAD(+) = 4-methyl-2-oxopentanoate + CO2 + NADH. It functions in the pathway amino-acid biosynthesis; L-leucine biosynthesis; L-leucine from 3-methyl-2-oxobutanoate: step 3/4. Catalyzes the oxidation of 3-carboxy-2-hydroxy-4-methylpentanoate (3-isopropylmalate) to 3-carboxy-4-methyl-2-oxopentanoate. The product decarboxylates to 4-methyl-2 oxopentanoate. The protein is 3-isopropylmalate dehydrogenase of Mannheimia succiniciproducens (strain KCTC 0769BP / MBEL55E).